The chain runs to 644 residues: Protein cueball (644 aa).

The N-terminal stretch at Met1–Gly26 is a signal peptide. Topologically, residues Thr27–Ser531 are extracellular. N-linked (GlcNAc...) asparagine glycosylation is found at Asn82 and Asn108. LDL-receptor class B repeat units follow at residues Met121–Arg166, Arg167–Ser211, and Asp212–Ala257. N-linked (GlcNAc...) asparagine glycans are attached at residues Asn175 and Asn190. Positions Thr280–Pro301 are disordered. Positions Glu286–Pro301 are enriched in acidic residues. Asn313 is a glycosylation site (N-linked (GlcNAc...) asparagine). EGF-like domains lie at Glu398 to Glu430 and Glu433 to Glu471. Cystine bridges form between Cys402–Cys411, Cys406–Cys421, Cys437–Cys447, Cys441–Cys459, and Cys461–Cys470. Asn473 and Asn508 each carry an N-linked (GlcNAc...) asparagine glycan. Residues Ser532–Val552 form a helical membrane-spanning segment. Residues His553 to Tyr644 lie on the Cytoplasmic side of the membrane.

Belongs to the cueball family.

It localises to the cell membrane. Its function is as follows. Has a role in spermatogenesis and oogenesis. In Drosophila sechellia (Fruit fly), this protein is Protein cueball.